The primary structure comprises 198 residues: MATAEPSGRALRLSTPGPRPSGARDRAPGAAGPPSGQIGNRALRLGERTPAAVEKRGPYMVTRAPSIQAKLQKHRDLAKAVLRRKGMLGASPNRPDSSGKRSVKFNKGYTALSQSPDENLVSLDSDSDGELGSRYSSGYSSAEQVNQDVSRQLLQDGYHLDEIPDDEDLDLIPPKPMASSTCSCCWCCLGDSSSCTLQ.

Disordered stretches follow at residues 1-58 (MATA…KRGP) and 83-146 (RRKG…EQVN). Phosphoserine occurs at positions 14, 91, 125, and 127. A compositionally biased stretch (polar residues) spans 134–146 (RYSSGYSSAEQVN).

The protein belongs to the FAM219 family.

In Homo sapiens (Human), this protein is Protein FAM219B (FAM219B).